Here is a 338-residue protein sequence, read N- to C-terminus: Anthranilate phosphoribosyltransferase (338 aa).

5-phospho-alpha-D-ribose 1-diphosphate contacts are provided by residues G81, 84–85, S89, 91–94, 109–117, and S121; these read GD, NIST, and KHGNRSVSS. G81 contributes to the anthranilate binding site. A Mg(2+)-binding site is contributed by S93. N112 provides a ligand contact to anthranilate. R167 contacts anthranilate. Residues D226 and E227 each coordinate Mg(2+).

This sequence belongs to the anthranilate phosphoribosyltransferase family. As to quaternary structure, homodimer. Requires Mg(2+) as cofactor.

It catalyses the reaction N-(5-phospho-beta-D-ribosyl)anthranilate + diphosphate = 5-phospho-alpha-D-ribose 1-diphosphate + anthranilate. Its pathway is amino-acid biosynthesis; L-tryptophan biosynthesis; L-tryptophan from chorismate: step 2/5. Functionally, catalyzes the transfer of the phosphoribosyl group of 5-phosphorylribose-1-pyrophosphate (PRPP) to anthranilate to yield N-(5'-phosphoribosyl)-anthranilate (PRA). The protein is Anthranilate phosphoribosyltransferase of Thioalkalivibrio sulfidiphilus (strain HL-EbGR7).